The primary structure comprises 588 residues: Endogenous retrovirus group K member 7 Env polyprotein (588 aa).

The fusion peptide stretch occupies residues 355–375 (FIFTLIAVIMGLIAVTATAAV). A helical transmembrane segment spans residues 522–542 (IGSTTIINLILILVCLFCLLL).

It belongs to the beta type-B retroviral envelope protein family. HERV class-II K(HML-2) env subfamily. The surface (SU) and transmembrane (TM) proteins form a heterodimer. SU and TM are attached by noncovalent interactions or by a labile interchain disulfide bond. Post-translationally, specific enzymatic cleavages in vivo yield the mature SU and TM proteins. As to expression, expressed in lung, placenta, testis and peripheral blood lymphocytes.

The protein resides in the virion. It is found in the cell membrane. Retroviral envelope proteins mediate receptor recognition and membrane fusion during early infection. Endogenous envelope proteins may have kept, lost or modified their original function during evolution. Functionally, SU mediates receptor recognition. Its function is as follows. TM anchors the envelope heterodimer to the viral membrane through one transmembrane domain. The other hydrophobic domain, called fusion peptide, mediates fusion of the viral membrane with the target cell membrane. In Homo sapiens (Human), this protein is Endogenous retrovirus group K member 7 Env polyprotein (ERVK-7).